Consider the following 304-residue polypeptide: Acetylglutamate kinase (304 aa).

Substrate-binding positions include 77–78 (GG), R99, and N193.

This sequence belongs to the acetylglutamate kinase family. ArgB subfamily.

Its subcellular location is the cytoplasm. The enzyme catalyses N-acetyl-L-glutamate + ATP = N-acetyl-L-glutamyl 5-phosphate + ADP. It participates in amino-acid biosynthesis; L-arginine biosynthesis; N(2)-acetyl-L-ornithine from L-glutamate: step 2/4. Its function is as follows. Catalyzes the ATP-dependent phosphorylation of N-acetyl-L-glutamate. The polypeptide is Acetylglutamate kinase (Pelodictyon phaeoclathratiforme (strain DSM 5477 / BU-1)).